Consider the following 445-residue polypeptide: MHATYKSAIVRTGPNQVHVNDPEVYKNTFASASPFDKSRFFYSSVGVGDAIGAIMDRKQHHIRRTLLSPGLRANVILSYSPNLHKLVMNCADVMSGQARQAKSINLLRYTRSLTVDVIGDFTFGRPMGLVNEEDEMPELIRDLQDFSSQFHLWKHFPLLRKLVTAIPKSISRKWMPGFVQLREKSTAAVNEYLAGKQAGKPVSNTLKEGTFLDLLLNPPEKITSEAPKPSVLIDEGCAFITGGSDTTGFTMENATYLVLRHPSCLQKLRQELDEASRHIKDVFSPQHLLQLPFLSAVVKETLRLYTPAASPLPRTVPDDGVMIHGHFLPDGTILTHSLYLIHHNPNFFTNPKSFQPERWLGSSAKDLEQYYVPFSKGSRSCIGMTLAYHEIYTYLAIVFSRFDMELFNTTDRDMEWRDHFFVKRKGVLKVRIVRDRWSGEEFTSP.

C381 is a binding site for heme.

This sequence belongs to the cytochrome P450 family. Heme serves as cofactor.

Its pathway is secondary metabolite biosynthesis. It functions in the pathway alkaloid biosynthesis. It participates in mycotoxin biosynthesis. Cytochrome P450 monooxygenase; part of the gene cluster that mediates the biosynthesis of penigequinolones, potent insecticidal alkaloids that contain a highly modified 10-carbon prenyl group. The first stage is catalyzed by the nonribosomal peptide synthetase penN that condenses anthranilic acid and O-methyl-L-tyrosine to produce 4'-methoxycyclopeptin. 4'-methoxycyclopeptin is then converted to 4'-methoxydehydrocyclopeptin by the ketoglutarate-dependent dioxygenase penM through dehydrogenation to form a double bond between C-alpha and C-beta of the O-methyltyrosine side chain. PenM also converts its first product methoxydehydrocyclopeptin to 4'-methoxycyclopenin. The following conversion of 4'methoxycyclopenin into 4'-methoxyviridicatin is catalyzed by the cyclopenase penL. 4'-methoxyviridicatin is the precursor of quinolone natural products, and is further converted to quinolinone B. The prenyltransferase penI then catalyzes the canonical Friedel-Crafts alkylation of quinolinone B with dimethylallyl cation to yield dimethylallyl quinolone, which is subjected to FAD-dependent dehydrogenation by the FAD-linked oxidoreductase penH to yield conjugated aryl diene. The delta(3') double bond then serves as the site of the second alkylation with DMAPP catalyzed by the prenyltransferase penG to yield a carbenium ion intermediate, which can be attacked by H(2)O to yield a styrenyl quinolone containing a C3'-hydroxyprenyl chain, or undergo cyclization to yield yaequinolones J1 and J2. The conversion of the styrenyl quinolone into the tetrahydrofuran-containing yaequinolone C is performed by the FAD-dependent monooxygenase penE and involves epoxidation of the terminal C7'-C8' olefin, followed by epoxide ring opening initiated by the C3' hydroxyl group. The predicted cysteine hydrolase penJ acts as an epoxide hydrolase that enhances the rate of the 5-exo-tet cyclization step, increasing the yield of yaequinolone C. PenF catalyzes the cationic rearrangement of the epoxide formed by penE (before ring opening to produce yaequinolone C) into yaequinolone D. Finally, the short-chain dehydrogenase/reductase (SDR)-like reductase penD, catalyzes both the dehydration of yaequinolone D and the reduction of the resulting oxonium to yield penigequinolone. This chain is Cytochrome P450 monooxygenase penB, found in Penicillium thymicola.